Reading from the N-terminus, the 102-residue chain is NADH-quinone oxidoreductase subunit K 2 (102 aa).

3 helical membrane-spanning segments follow: residues 6-26, 30-50, and 66-86; these read LEAF…GIIA, LVTV…ALVG, and FIIA…IAIF.

It belongs to the complex I subunit 4L family. In terms of assembly, NDH-1 is composed of 14 different subunits. Subunits NuoA, H, J, K, L, M, N constitute the membrane sector of the complex.

The protein resides in the cell inner membrane. The enzyme catalyses a quinone + NADH + 5 H(+)(in) = a quinol + NAD(+) + 4 H(+)(out). Functionally, NDH-1 shuttles electrons from NADH, via FMN and iron-sulfur (Fe-S) centers, to quinones in the respiratory chain. The immediate electron acceptor for the enzyme in this species is believed to be ubiquinone. Couples the redox reaction to proton translocation (for every two electrons transferred, four hydrogen ions are translocated across the cytoplasmic membrane), and thus conserves the redox energy in a proton gradient. The polypeptide is NADH-quinone oxidoreductase subunit K 2 (Aquifex aeolicus (strain VF5)).